Reading from the N-terminus, the 96-residue chain is Prokineticin Bm8-b (96 aa).

An N-terminal signal peptide occupies residues Met-1 to Gly-19. Intrachain disulfides connect Cys-32/Cys-50, Cys-37/Cys-78, Cys-60/Cys-86, and Cys-80/Cys-95.

Belongs to the AVIT (prokineticin) family. As to expression, expressed by the skin glands.

The protein localises to the secreted. Potent agonist for both PKR1/PROKR1 and PKR2/PROKR2, and inducer of a potent and long-lasting hyperalgesia. Also potentiates capsaicin-induced TRPV1 current, when tested on DRG neurons. At subnanomolar concentrations, this protein both induces potent chemotaxis of macrophages and stimulates LPS-induced production of the pro-inflammatory cytokines IL-1 and IL-12. In vivo, potently stimulates the contraction of the guinea-pig gastrointestinal (GI) smooth muscle (nanomolar concentration). In Bombina maxima (Giant fire-bellied toad), this protein is Prokineticin Bm8-b.